We begin with the raw amino-acid sequence, 417 residues long: NADH-quinone oxidoreductase subunit D (417 aa).

This sequence belongs to the complex I 49 kDa subunit family. As to quaternary structure, NDH-1 is composed of 14 different subunits. Subunits NuoB, C, D, E, F, and G constitute the peripheral sector of the complex.

The protein resides in the cell inner membrane. It carries out the reaction a quinone + NADH + 5 H(+)(in) = a quinol + NAD(+) + 4 H(+)(out). Functionally, NDH-1 shuttles electrons from NADH, via FMN and iron-sulfur (Fe-S) centers, to quinones in the respiratory chain. The immediate electron acceptor for the enzyme in this species is believed to be ubiquinone. Couples the redox reaction to proton translocation (for every two electrons transferred, four hydrogen ions are translocated across the cytoplasmic membrane), and thus conserves the redox energy in a proton gradient. This is NADH-quinone oxidoreductase subunit D from Cupriavidus metallidurans (strain ATCC 43123 / DSM 2839 / NBRC 102507 / CH34) (Ralstonia metallidurans).